The primary structure comprises 385 residues: Lipid-A-disaccharide synthase (385 aa).

The protein belongs to the LpxB family.

The enzyme catalyses a lipid X + a UDP-2-N,3-O-bis[(3R)-3-hydroxyacyl]-alpha-D-glucosamine = a lipid A disaccharide + UDP + H(+). It participates in bacterial outer membrane biogenesis; LPS lipid A biosynthesis. Functionally, condensation of UDP-2,3-diacylglucosamine and 2,3-diacylglucosamine-1-phosphate to form lipid A disaccharide, a precursor of lipid A, a phosphorylated glycolipid that anchors the lipopolysaccharide to the outer membrane of the cell. This Xylella fastidiosa (strain M23) protein is Lipid-A-disaccharide synthase.